Consider the following 507-residue polypeptide: Phospho-2-dehydro-3-deoxyheptonate aldolase 2, chloroplastic (507 aa).

Belongs to the class-II DAHP synthase family.

The protein localises to the plastid. It is found in the chloroplast. It catalyses the reaction D-erythrose 4-phosphate + phosphoenolpyruvate + H2O = 7-phospho-2-dehydro-3-deoxy-D-arabino-heptonate + phosphate. It participates in metabolic intermediate biosynthesis; chorismate biosynthesis; chorismate from D-erythrose 4-phosphate and phosphoenolpyruvate: step 1/7. The protein is Phospho-2-dehydro-3-deoxyheptonate aldolase 2, chloroplastic (DHS2) of Arabidopsis thaliana (Mouse-ear cress).